Reading from the N-terminus, the 254-residue chain is uncharacterized protein (254 aa).

A run of 8 helical transmembrane segments spans residues Val-41–Ile-61, Ile-64–Phe-84, Ile-91–Leu-111, Ile-125–Ala-145, Pro-146–Phe-166, Phe-172–Leu-192, Met-204–Pro-224, and Ile-232–Leu-252.

This sequence belongs to the TatC family.

It localises to the plastid. It is found in the chloroplast membrane. This is an uncharacterized protein from Porphyra purpurea (Red seaweed).